We begin with the raw amino-acid sequence, 264 residues long: Indole-3-glycerol phosphate synthase (264 aa).

The protein belongs to the TrpC family.

The enzyme catalyses 1-(2-carboxyphenylamino)-1-deoxy-D-ribulose 5-phosphate + H(+) = (1S,2R)-1-C-(indol-3-yl)glycerol 3-phosphate + CO2 + H2O. Its pathway is amino-acid biosynthesis; L-tryptophan biosynthesis; L-tryptophan from chorismate: step 4/5. This Carboxydothermus hydrogenoformans (strain ATCC BAA-161 / DSM 6008 / Z-2901) protein is Indole-3-glycerol phosphate synthase.